A 448-amino-acid chain; its full sequence is Gamete and mating-type specific protein A (448 aa).

A signal peptide spans 1 to 19; that stretch reads MKLILVLLCLISTLFVVKG. Positions 30–157 constitute an SCP domain; sequence VSYHNKWRSS…PDKSEVSCSY (128 aa). Residues Asn-55, Asn-98, and Asn-119 are each glycosylated (N-linked (GlcNAc...) asparagine). The segment at 171–242 is disordered; the sequence is PKTTTPAPTT…PTTPAPTSTL (72 aa). A compositionally biased stretch (pro residues) spans 178 to 236; sequence PTTPAPTTPKPTTPAPTTPKPTTPAPTTPKPTTPAPTTPKPTTPAPTTPKPTTPAPTTP. Active-site residues include Cys-262, His-397, and Asn-415.

Belongs to the peptidase C1 family.

The protein resides in the secreted. Functionally, thiol protease that seems to be involved in the sexual development. This is Gamete and mating-type specific protein A (gmsA) from Dictyostelium discoideum (Social amoeba).